The primary structure comprises 1323 residues: DNA-directed RNA polymerase subunit beta' (1323 aa).

Zn(2+)-binding residues include Cys60, Cys62, Cys75, and Cys78. The Mg(2+) site is built by Asp535, Asp537, and Asp539. 4 residues coordinate Zn(2+): Cys894, Cys977, Cys984, and Cys987.

The protein belongs to the RNA polymerase beta' chain family. In terms of assembly, the RNAP catalytic core consists of 2 alpha, 1 beta, 1 beta' and 1 omega subunit. When a sigma factor is associated with the core the holoenzyme is formed, which can initiate transcription. The cofactor is Mg(2+). Requires Zn(2+) as cofactor.

It carries out the reaction RNA(n) + a ribonucleoside 5'-triphosphate = RNA(n+1) + diphosphate. Functionally, DNA-dependent RNA polymerase catalyzes the transcription of DNA into RNA using the four ribonucleoside triphosphates as substrates. This Corynebacterium jeikeium (strain K411) protein is DNA-directed RNA polymerase subunit beta'.